A 377-amino-acid polypeptide reads, in one-letter code: Queuine tRNA-ribosyltransferase (377 aa).

The Proton acceptor role is filled by aspartate 89. Residues 89-93 (DSGGF), aspartate 143, glutamine 188, and glycine 215 contribute to the substrate site. The tract at residues 246–252 (GVGKPED) is RNA binding. Catalysis depends on aspartate 265, which acts as the Nucleophile. The tract at residues 270–274 (TRNAR) is RNA binding; important for wobble base 34 recognition. Cysteine 303, cysteine 305, cysteine 308, and histidine 334 together coordinate Zn(2+).

Belongs to the queuine tRNA-ribosyltransferase family. Homodimer. Within each dimer, one monomer is responsible for RNA recognition and catalysis, while the other monomer binds to the replacement base PreQ1. The cofactor is Zn(2+).

It catalyses the reaction 7-aminomethyl-7-carbaguanine + guanosine(34) in tRNA = 7-aminomethyl-7-carbaguanosine(34) in tRNA + guanine. The protein operates within tRNA modification; tRNA-queuosine biosynthesis. Functionally, catalyzes the base-exchange of a guanine (G) residue with the queuine precursor 7-aminomethyl-7-deazaguanine (PreQ1) at position 34 (anticodon wobble position) in tRNAs with GU(N) anticodons (tRNA-Asp, -Asn, -His and -Tyr). Catalysis occurs through a double-displacement mechanism. The nucleophile active site attacks the C1' of nucleotide 34 to detach the guanine base from the RNA, forming a covalent enzyme-RNA intermediate. The proton acceptor active site deprotonates the incoming PreQ1, allowing a nucleophilic attack on the C1' of the ribose to form the product. After dissociation, two additional enzymatic reactions on the tRNA convert PreQ1 to queuine (Q), resulting in the hypermodified nucleoside queuosine (7-(((4,5-cis-dihydroxy-2-cyclopenten-1-yl)amino)methyl)-7-deazaguanosine). The sequence is that of Queuine tRNA-ribosyltransferase from Acinetobacter baumannii (strain SDF).